A 280-amino-acid chain; its full sequence is DCN1-like protein 4 (280 aa).

A disordered region spans residues 37–71; sequence GPESHGTACCSRAMPPRKKRRPTAGDDLSAKKSRQ. In terms of domain architecture, DCUN1 spans 89–275; it reads FSSKRCLEWF…LLDEFVEWYK (187 aa).

In terms of assembly, may interact (via the DCUN1 domain) with unneddylated cullins.

It localises to the nucleus. In terms of biological role, contributes to the neddylation of all cullins by transferring NEDD8 from N-terminally acetylated NEDD8-conjugating E2s enzyme to different cullin C-terminal domain-RBX complexes. In Danio rerio (Zebrafish), this protein is DCN1-like protein 4.